Reading from the N-terminus, the 283-residue chain is Acetylglutamate kinase (283 aa).

Substrate contacts are provided by residues 63 to 64, Arg-85, and Asn-178; that span reads GG.

It belongs to the acetylglutamate kinase family. ArgB subfamily.

Its subcellular location is the cytoplasm. The enzyme catalyses N-acetyl-L-glutamate + ATP = N-acetyl-L-glutamyl 5-phosphate + ADP. The protein operates within amino-acid biosynthesis; L-arginine biosynthesis; N(2)-acetyl-L-ornithine from L-glutamate: step 2/4. Its function is as follows. Catalyzes the ATP-dependent phosphorylation of N-acetyl-L-glutamate. This chain is Acetylglutamate kinase, found in Prochlorococcus marinus (strain MIT 9312).